We begin with the raw amino-acid sequence, 347 residues long: CD5 antigen-like (347 aa).

An N-terminal signal peptide occupies residues 1 to 19; the sequence is MALLFSLILAICTRPGFLA. SRCR domains are found at residues 24–125, 138–239, and 244–346; these read VRLV…ASCE, VRLA…VECE, and LRLV…VICS. 11 disulfides stabilise this stretch: Cys33-Cys67, Cys49-Cys114, Cys62-Cys124, Cys96-Cys106, Cys163-Cys228, Cys176-Cys238, Cys208-Cys218, Cys253-Cys287, Cys269-Cys335, Cys282-Cys345, and Cys315-Cys325.

As to quaternary structure, interacts with FASN; the interaction is direct. Interacts (via SRCR2 and SRCR3) with pentameric IgM (via Fc region); disulfide-linked. In terms of processing, not N-glycosylated. Probably not O-glycosylated. Expressed in spleen, lymph node, thymus, bone marrow, and fetal liver, but not in non-lymphoid tissues.

It localises to the secreted. Its subcellular location is the cytoplasm. Its function is as follows. Secreted protein that acts as a key regulator of lipid synthesis: mainly expressed by macrophages in lymphoid and inflamed tissues and regulates mechanisms in inflammatory responses, such as infection or atherosclerosis. Able to inhibit lipid droplet size in adipocytes. Following incorporation into mature adipocytes via CD36-mediated endocytosis, associates with cytosolic FASN, inhibiting fatty acid synthase activity and leading to lipolysis, the degradation of triacylglycerols into glycerol and free fatty acids (FFA). CD5L-induced lipolysis occurs with progression of obesity: participates in obesity-associated inflammation following recruitment of inflammatory macrophages into adipose tissues, a cause of insulin resistance and obesity-related metabolic disease. Regulation of intracellular lipids mediated by CD5L has a direct effect on transcription regulation mediated by nuclear receptors ROR-gamma (RORC). Acts as a key regulator of metabolic switch in T-helper Th17 cells. Regulates the expression of pro-inflammatory genes in Th17 cells by altering the lipid content and limiting synthesis of cholesterol ligand of RORC, the master transcription factor of Th17-cell differentiation. CD5L is mainly present in non-pathogenic Th17 cells, where it decreases the content of polyunsaturated fatty acyls (PUFA), affecting two metabolic proteins MSMO1 and CYP51A1, which synthesize ligands of RORC, limiting RORC activity and expression of pro-inflammatory genes. Participates in obesity-associated autoimmunity via its association with IgM, interfering with the binding of IgM to Fcalpha/mu receptor and enhancing the development of long-lived plasma cells that produce high-affinity IgG autoantibodies. Also acts as an inhibitor of apoptosis in macrophages: promotes macrophage survival from the apoptotic effects of oxidized lipids in case of atherosclerosis. Involved in early response to microbial infection against various pathogens by acting as a pattern recognition receptor and by promoting autophagy. The polypeptide is CD5 antigen-like (CD5L) (Homo sapiens (Human)).